Consider the following 353-residue polypeptide: UDP-N-acetylglucosamine--N-acetylmuramyl-(pentapeptide) pyrophosphoryl-undecaprenol N-acetylglucosamine transferase (353 aa).

Residues 10-12 (TGG), N124, S183, and Q283 contribute to the UDP-N-acetyl-alpha-D-glucosamine site.

This sequence belongs to the glycosyltransferase 28 family. MurG subfamily.

Its subcellular location is the cell inner membrane. It catalyses the reaction di-trans,octa-cis-undecaprenyl diphospho-N-acetyl-alpha-D-muramoyl-L-alanyl-D-glutamyl-meso-2,6-diaminopimeloyl-D-alanyl-D-alanine + UDP-N-acetyl-alpha-D-glucosamine = di-trans,octa-cis-undecaprenyl diphospho-[N-acetyl-alpha-D-glucosaminyl-(1-&gt;4)]-N-acetyl-alpha-D-muramoyl-L-alanyl-D-glutamyl-meso-2,6-diaminopimeloyl-D-alanyl-D-alanine + UDP + H(+). The protein operates within cell wall biogenesis; peptidoglycan biosynthesis. Functionally, cell wall formation. Catalyzes the transfer of a GlcNAc subunit on undecaprenyl-pyrophosphoryl-MurNAc-pentapeptide (lipid intermediate I) to form undecaprenyl-pyrophosphoryl-MurNAc-(pentapeptide)GlcNAc (lipid intermediate II). The protein is UDP-N-acetylglucosamine--N-acetylmuramyl-(pentapeptide) pyrophosphoryl-undecaprenol N-acetylglucosamine transferase of Helicobacter pylori (strain HPAG1).